A 396-amino-acid polypeptide reads, in one-letter code: Elongation factor Tu (396 aa).

Residues 10-206 form the tr-type G domain; sequence KPHVNIGTIG…AVDSYIPEPV (197 aa). The G1 stretch occupies residues 19–26; the sequence is GHVDHGKT. 19-26 contacts GTP; sequence GHVDHGKT. T26 contributes to the Mg(2+) binding site. Residues 60–64 form a G2 region; it reads GITIA. Residues 81 to 84 are G3; it reads DCPG. Residues 81 to 85 and 136 to 139 each bind GTP; these read DCPGH and NKAD. The tract at residues 136–139 is G4; the sequence is NKAD. The segment at 174–176 is G5; sequence SAL.

This sequence belongs to the TRAFAC class translation factor GTPase superfamily. Classic translation factor GTPase family. EF-Tu/EF-1A subfamily. As to quaternary structure, monomer.

It is found in the cytoplasm. It catalyses the reaction GTP + H2O = GDP + phosphate + H(+). Its function is as follows. GTP hydrolase that promotes the GTP-dependent binding of aminoacyl-tRNA to the A-site of ribosomes during protein biosynthesis. This Geotalea uraniireducens (strain Rf4) (Geobacter uraniireducens) protein is Elongation factor Tu.